The chain runs to 150 residues: Arginine repressor (150 aa).

The protein belongs to the ArgR family.

The protein resides in the cytoplasm. Its pathway is amino-acid biosynthesis; L-arginine biosynthesis [regulation]. Its function is as follows. Regulates arginine biosynthesis genes. The chain is Arginine repressor from Carboxydothermus hydrogenoformans (strain ATCC BAA-161 / DSM 6008 / Z-2901).